The sequence spans 137 residues: Large ribosomal subunit protein uL16 (137 aa).

This sequence belongs to the universal ribosomal protein uL16 family. Part of the 50S ribosomal subunit.

Functionally, binds 23S rRNA and is also seen to make contacts with the A and possibly P site tRNAs. This chain is Large ribosomal subunit protein uL16, found in Streptococcus equi subsp. zooepidemicus (strain H70).